We begin with the raw amino-acid sequence, 230 residues long: Small ribosomal subunit protein uS3 (230 aa).

The KH type-2 domain occupies 39-107 (VRNYLRQKLA…PIHVNIEEIR (69 aa)). Residues 210–230 (SSKPEHESKQRKAGRRNAAAN) are disordered.

The protein belongs to the universal ribosomal protein uS3 family. As to quaternary structure, part of the 30S ribosomal subunit. Forms a tight complex with proteins S10 and S14.

Its function is as follows. Binds the lower part of the 30S subunit head. Binds mRNA in the 70S ribosome, positioning it for translation. This is Small ribosomal subunit protein uS3 from Neisseria gonorrhoeae (strain ATCC 700825 / FA 1090).